Reading from the N-terminus, the 395-residue chain is Peptide-N(4)-(N-acetyl-beta-glucosaminyl)asparagine amidase (395 aa).

4 residues coordinate Zn(2+): cysteine 131, cysteine 134, cysteine 172, and cysteine 175. Cysteine 198 (nucleophile) is an active-site residue. Active-site residues include histidine 232 and aspartate 249. Substrate is bound at residue glutamate 252. Positions 363-395 (PELTKTTPSTDLPSGRQSGSTEWTKSRGENGES) are disordered. Residues 366–385 (TKTTPSTDLPSGRQSGSTEW) are compositionally biased toward polar residues. The segment covering 386 to 395 (TKSRGENGES) has biased composition (basic and acidic residues).

Belongs to the transglutaminase-like superfamily. PNGase family. The cofactor is Zn(2+).

The protein localises to the cytoplasm. The catalysed reaction is Hydrolysis of an N(4)-(acetyl-beta-D-glucosaminyl)asparagine residue in which the glucosamine residue may be further glycosylated, to yield a (substituted) N-acetyl-beta-D-glucosaminylamine and a peptide containing an aspartate residue.. Functionally, specifically deglycosylates the denatured form of N-linked glycoproteins in the cytoplasm and assists their proteasome-mediated degradation. Cleaves the beta-aspartyl-glucosamine (GlcNAc) of the glycan and the amide side chain of Asn, converting Asn to Asp. Prefers proteins containing high-mannose over those bearing complex type oligosaccharides. Can recognize misfolded proteins in the endoplasmic reticulum that are exported to the cytosol to be destroyed and deglycosylate them, while it has no activity toward native proteins. Deglycosylation is a prerequisite for subsequent proteasome-mediated degradation of some, but not all, misfolded glycoproteins. The sequence is that of Peptide-N(4)-(N-acetyl-beta-glucosaminyl)asparagine amidase (PNG1) from Candida albicans (strain SC5314 / ATCC MYA-2876) (Yeast).